The following is a 503-amino-acid chain: Splicing factor 3A subunit 3 (503 aa).

Disordered stretches follow at residues 296–317 (PALMAKKPSAKTASAQSREHER) and 341–384 (ATKE…NPKN). Over residues 358-377 (DDSDVEASESDNEDDPDADD) the composition is skewed to acidic residues. Phosphoserine occurs at positions 360, 365, and 367. The Matrin-type zinc-finger motif lies at 408–439 (YNCEICGNFTYKGPKAFQRHFAEWRHAHGMRC).

Belongs to the SF3A3 family. In terms of assembly, probable component of a the U2 small nuclear ribonucleoproteins complex (U2 snRNP). In terms of tissue distribution, ubiquitous. In ovaries and testes, it is expressed in all germ and somatic cells. Highly expressed in spermatogonias and spermatocytes. Highly expressed in the germ cells of larval testes, while it is weakly expressed in fat body cells, in polyploid nuclei of salivary glands, and in larval brain.

The protein resides in the nucleus. In terms of biological role, probable subunit of a splicing factor complex required for 'A' complex assembly formed by the stable binding of U2 snRNP to the branchpoint sequence (BPS) in pre-mRNA. Involved in male fertility. This is Splicing factor 3A subunit 3 (noi) from Drosophila melanogaster (Fruit fly).